The sequence spans 601 residues: Elongation factor 4 (601 aa).

One can recognise a tr-type G domain in the interval 5 to 187 (ENIRNFCIVA…AIITTFPPPK (183 aa)). Residues 17 to 22 (DHGKST) and 134 to 137 (NKID) contribute to the GTP site.

It belongs to the TRAFAC class translation factor GTPase superfamily. Classic translation factor GTPase family. LepA subfamily.

It localises to the cell inner membrane. The enzyme catalyses GTP + H2O = GDP + phosphate + H(+). Its function is as follows. Required for accurate and efficient protein synthesis under certain stress conditions. May act as a fidelity factor of the translation reaction, by catalyzing a one-codon backward translocation of tRNAs on improperly translocated ribosomes. Back-translocation proceeds from a post-translocation (POST) complex to a pre-translocation (PRE) complex, thus giving elongation factor G a second chance to translocate the tRNAs correctly. Binds to ribosomes in a GTP-dependent manner. This Treponema denticola (strain ATCC 35405 / DSM 14222 / CIP 103919 / JCM 8153 / KCTC 15104) protein is Elongation factor 4.